The chain runs to 69 residues: Dermaseptin-H3 (69 aa).

Positions 1-22 (MAFLKKSLFLVLFLGMVSLSIC) are cleaved as a signal peptide. Residues 23–43 (EEEKRENEDEEKQEDDEQSEM) constitute a propeptide that is removed on maturation. The segment at 24–44 (EEKRENEDEEKQEDDEQSEMK) is disordered. Over residues 30–40 (EDEEKQEDDEQ) the composition is skewed to acidic residues. A Leucine amide modification is found at Leu-66. The propeptide occupies 68-69 (EQ).

This sequence belongs to the frog skin active peptide (FSAP) family. Dermaseptin subfamily. Expressed by the skin glands.

It is found in the secreted. Its function is as follows. Possesses a potent antimicrobial activity against Gram-positive and Gram-negative bacteria. Probably acts by disturbing membrane functions with its amphipathic structure. This is Dermaseptin-H3 from Pithecopus azureus (Orange-legged monkey tree frog).